Here is a 342-residue protein sequence, read N- to C-terminus: Nicotinate-nucleotide--dimethylbenzimidazole phosphoribosyltransferase (342 aa).

Glu311 (proton acceptor) is an active-site residue.

Belongs to the CobT family.

The catalysed reaction is 5,6-dimethylbenzimidazole + nicotinate beta-D-ribonucleotide = alpha-ribazole 5'-phosphate + nicotinate + H(+). Its pathway is nucleoside biosynthesis; alpha-ribazole biosynthesis; alpha-ribazole from 5,6-dimethylbenzimidazole: step 1/2. Functionally, catalyzes the synthesis of alpha-ribazole-5'-phosphate from nicotinate mononucleotide (NAMN) and 5,6-dimethylbenzimidazole (DMB). This chain is Nicotinate-nucleotide--dimethylbenzimidazole phosphoribosyltransferase, found in Vibrio vulnificus (strain CMCP6).